The sequence spans 126 residues: Protein ApaG (126 aa).

The ApaG domain maps to S2 to H126.

The sequence is that of Protein ApaG from Shewanella sp. (strain W3-18-1).